Here is an 841-residue protein sequence, read N- to C-terminus: MTKELRSKLFTILKIAFALTLFTIVAITLYKELSHINLKDAIKSFSKINRFWLVALFLSGGASIIVLSIYDVILAKTLKLKIGLAKTIRIGYIVNALNAVVGFGGFIGASVRFLFYKNTTDDKKALFHTISIVLISMLTGLSLLSILVVIHVFDISHIFTPYPWVKWLMYVVALFLPIFVVFTIIKPVQKTHRLLGVYCTIVSGVEWFVAALVLYMSMAIVGVQIPFATFMGIFILAALSGLISFIPGGFGTFDLVVLLGLKALNVNEEAIVLGLSLYRFAYYLFPVLIALILSTFEFRSTAKRYWEDSRILVPVKDMTSLLGSYQKDIIARIPSFAIALLLLFTSLVFFLNNLTIIYDGLYDPNHYIYYIIVSIHTCACLLLLLNVIGVYKLSKRAILFSIISVLFIFIATAYTYASFILLSWLTVIFILLLVFYRRARVIKRPFRYSKLLLSVITGAIILYINHLVIKSTFYSLEIYHIEMLTSILRYYFWITILLVAIIVGVIVWWFEYRYRSSNSRDNIATCESIIDKYNGNYLSHLMYSGDKKFFINDNKDAFVMYRYHNNTYIILGDPIGNSESFYSLLEAFYKEAEYLGYDIIFYQVTDKYMSLYHSFGNQFFKLGEEAVINLTSFTTSGKKKRGLRATLNKLDDLGYSFEVLEPPFSQQMITDLKAISDDWLADKNEMHFSVGSFDEHYISQAPIGVLKDNEQSVIAFCTLMPTYYNGVISVDLIRWKQDIELPLMDSLYLNMLLWSKDNNYEHFNMGMATLSNVGQIPYSFYGERIAGRVFEHFNGLYRFQGLRRYKEKFNPKWEPRFLVYRKHQSLWVSMLKVMRVIRKNN.

Residues 1–8 (MTKELRSK) lie on the Cytoplasmic side of the membrane. Residues 9 to 29 (LFTILKIAFALTLFTIVAITL) form a helical membrane-spanning segment. The Extracellular portion of the chain corresponds to 30 to 52 (YKELSHINLKDAIKSFSKINRFW). The chain crosses the membrane as a helical span at residues 53–73 (LVALFLSGGASIIVLSIYDVI). Over 74 to 89 (LAKTLKLKIGLAKTIR) the chain is Cytoplasmic. The chain crosses the membrane as a helical span at residues 90–110 (IGYIVNALNAVVGFGGFIGAS). Residues 111–129 (VRFLFYKNTTDDKKALFHT) are Extracellular-facing. A helical membrane pass occupies residues 130–150 (ISIVLISMLTGLSLLSILVVI). The Cytoplasmic portion of the chain corresponds to 151–164 (HVFDISHIFTPYPW). Residues 165–185 (VKWLMYVVALFLPIFVVFTII) traverse the membrane as a helical segment. Residues 186-193 (KPVQKTHR) lie on the Extracellular side of the membrane. A helical transmembrane segment spans residues 194–216 (LLGVYCTIVSGVEWFVAALVLYM). Over 217 to 229 (SMAIVGVQIPFAT) the chain is Cytoplasmic. The chain crosses the membrane as a helical span at residues 230–250 (FMGIFILAALSGLISFIPGGF). Over 251–270 (GTFDLVVLLGLKALNVNEEA) the chain is Extracellular. The helical transmembrane segment at 271–291 (IVLGLSLYRFAYYLFPVLIAL) threads the bilayer. The Cytoplasmic portion of the chain corresponds to 292–336 (ILSTFEFRSTAKRYWEDSRILVPVKDMTSLLGSYQKDIIARIPSF). A helical transmembrane segment spans residues 337–357 (AIALLLLFTSLVFFLNNLTII). Residues 358–367 (YDGLYDPNHY) lie on the Extracellular side of the membrane. The chain crosses the membrane as a helical span at residues 368 to 388 (IYYIIVSIHTCACLLLLLNVI). Residues 389 to 392 (GVYK) lie on the Cytoplasmic side of the membrane. The helical transmembrane segment at 393–413 (LSKRAILFSIISVLFIFIATA) threads the bilayer. The Extracellular segment spans residues 414 to 415 (YT). Residues 416–436 (YASFILLSWLTVIFILLLVFY) traverse the membrane as a helical segment. Over 437–448 (RRARVIKRPFRY) the chain is Cytoplasmic. Residues 449–469 (SKLLLSVITGAIILYINHLVI) form a helical membrane-spanning segment. The Extracellular portion of the chain corresponds to 470–489 (KSTFYSLEIYHIEMLTSILR). Residues 490-510 (YYFWITILLVAIIVGVIVWWF) form a helical membrane-spanning segment. Topologically, residues 511–841 (EYRYRSSNSR…KVMRVIRKNN (331 aa)) are cytoplasmic.

This sequence belongs to the LPG synthase family.

Its subcellular location is the cell membrane. It catalyses the reaction L-lysyl-tRNA(Lys) + a 1,2-diacyl-sn-glycero-3-phospho-(1'-sn-glycerol) = a 1,2-diacyl-sn-glycero-3-phospho-1'-(3'-O-L-lysyl)-sn-glycerol + tRNA(Lys). Its function is as follows. Catalyzes the transfer of a lysyl group from L-lysyl-tRNA(Lys) to membrane-bound phosphatidylglycerol (PG), which produces lysylphosphatidylglycerol (LPG), a major component of the bacterial membrane with a positive net charge. LPG synthesis contributes to bacterial virulence as it is involved in the resistance mechanism against cationic antimicrobial peptides (CAMP) produces by the host's immune system (defensins, cathelicidins) and by the competing microorganisms (bacteriocins). In fact, the modification of anionic phosphatidylglycerol with positively charged L-lysine results in repulsion of the peptides. In Staphylococcus xylosus, this protein is Phosphatidylglycerol lysyltransferase (mprF).